Consider the following 859-residue polypeptide: DNA mismatch repair protein MutS (859 aa).

Residue 617-624 participates in ATP binding; sequence GPNMGGKS.

This sequence belongs to the DNA mismatch repair MutS family.

This protein is involved in the repair of mismatches in DNA. It is possible that it carries out the mismatch recognition step. This protein has a weak ATPase activity. The polypeptide is DNA mismatch repair protein MutS (Stutzerimonas stutzeri (strain A1501) (Pseudomonas stutzeri)).